A 264-amino-acid chain; its full sequence is ATP synthase subunit a (264 aa).

The next 6 helical transmembrane spans lie at 29–49 (TWHI…LWIF), 90–110 (IAPL…MDMI), 134–154 (DVNI…YYSI), 177–197 (IPVN…SLAL), 208–228 (LIFI…SLGV), and 235–255 (LIFH…LTIV).

It belongs to the ATPase A chain family. In terms of assembly, F-type ATPases have 2 components, CF(1) - the catalytic core - and CF(0) - the membrane proton channel. CF(1) has five subunits: alpha(3), beta(3), gamma(1), delta(1), epsilon(1). CF(0) has three main subunits: a(1), b(2) and c(9-12). The alpha and beta chains form an alternating ring which encloses part of the gamma chain. CF(1) is attached to CF(0) by a central stalk formed by the gamma and epsilon chains, while a peripheral stalk is formed by the delta and b chains.

The protein resides in the cell inner membrane. Key component of the proton channel; it plays a direct role in the translocation of protons across the membrane. The sequence is that of ATP synthase subunit a from Shewanella oneidensis (strain ATCC 700550 / JCM 31522 / CIP 106686 / LMG 19005 / NCIMB 14063 / MR-1).